Here is a 307-residue protein sequence, read N- to C-terminus: Small ribosomal subunit biogenesis GTPase RsgA (307 aa).

One can recognise a CP-type G domain in the interval Lys80–Phe237. GTP-binding positions include Asn129 to Asp132 and Gly180 to Ser188. Positions 261, 266, 268, and 274 each coordinate Zn(2+).

Belongs to the TRAFAC class YlqF/YawG GTPase family. RsgA subfamily. As to quaternary structure, monomer. Associates with 30S ribosomal subunit, binds 16S rRNA. Requires Zn(2+) as cofactor.

It is found in the cytoplasm. Its function is as follows. One of several proteins that assist in the late maturation steps of the functional core of the 30S ribosomal subunit. Helps release RbfA from mature subunits. May play a role in the assembly of ribosomal proteins into the subunit. Circularly permuted GTPase that catalyzes slow GTP hydrolysis, GTPase activity is stimulated by the 30S ribosomal subunit. The protein is Small ribosomal subunit biogenesis GTPase RsgA of Borreliella burgdorferi (strain ATCC 35210 / DSM 4680 / CIP 102532 / B31) (Borrelia burgdorferi).